A 252-amino-acid polypeptide reads, in one-letter code: 3-dehydroquinate dehydratase (252 aa).

Residues S21, 46–48 (EWR), and R82 contribute to the 3-dehydroquinate site. H143 (proton donor/acceptor) is an active-site residue. The active-site Schiff-base intermediate with substrate is the K170. 3-dehydroquinate is bound by residues R213, S232, and Q236.

Belongs to the type-I 3-dehydroquinase family. Homodimer.

The catalysed reaction is 3-dehydroquinate = 3-dehydroshikimate + H2O. Its pathway is metabolic intermediate biosynthesis; chorismate biosynthesis; chorismate from D-erythrose 4-phosphate and phosphoenolpyruvate: step 3/7. In terms of biological role, involved in the third step of the chorismate pathway, which leads to the biosynthesis of aromatic amino acids. Catalyzes the cis-dehydration of 3-dehydroquinate (DHQ) and introduces the first double bond of the aromatic ring to yield 3-dehydroshikimate. The polypeptide is 3-dehydroquinate dehydratase (Salmonella agona (strain SL483)).